We begin with the raw amino-acid sequence, 316 residues long: Porphobilinogen deaminase (316 aa).

C242 carries the S-(dipyrrolylmethanemethyl)cysteine modification.

It belongs to the HMBS family. As to quaternary structure, monomer. The cofactor is dipyrromethane.

It carries out the reaction 4 porphobilinogen + H2O = hydroxymethylbilane + 4 NH4(+). It participates in porphyrin-containing compound metabolism; protoporphyrin-IX biosynthesis; coproporphyrinogen-III from 5-aminolevulinate: step 2/4. Tetrapolymerization of the monopyrrole PBG into the hydroxymethylbilane pre-uroporphyrinogen in several discrete steps. This Thioalkalivibrio sulfidiphilus (strain HL-EbGR7) protein is Porphobilinogen deaminase.